A 212-amino-acid chain; its full sequence is Large ribosomal subunit protein uL3 (212 aa).

Gln-153 carries the post-translational modification N5-methylglutamine.

This sequence belongs to the universal ribosomal protein uL3 family. In terms of assembly, part of the 50S ribosomal subunit. Forms a cluster with proteins L14 and L19. In terms of processing, methylated by PrmB.

Functionally, one of the primary rRNA binding proteins, it binds directly near the 3'-end of the 23S rRNA, where it nucleates assembly of the 50S subunit. The polypeptide is Large ribosomal subunit protein uL3 (Shewanella frigidimarina (strain NCIMB 400)).